We begin with the raw amino-acid sequence, 185 residues long: Ribosome-recycling factor (185 aa).

It belongs to the RRF family.

It localises to the cytoplasm. Its function is as follows. Responsible for the release of ribosomes from messenger RNA at the termination of protein biosynthesis. May increase the efficiency of translation by recycling ribosomes from one round of translation to another. This chain is Ribosome-recycling factor, found in Trichlorobacter lovleyi (strain ATCC BAA-1151 / DSM 17278 / SZ) (Geobacter lovleyi).